The chain runs to 450 residues: UDP-N-acetylmuramoylalanine--D-glutamate ligase (450 aa).

119–125 (GSNGKTT) serves as a coordination point for ATP.

Belongs to the MurCDEF family.

The protein resides in the cytoplasm. It catalyses the reaction UDP-N-acetyl-alpha-D-muramoyl-L-alanine + D-glutamate + ATP = UDP-N-acetyl-alpha-D-muramoyl-L-alanyl-D-glutamate + ADP + phosphate + H(+). It participates in cell wall biogenesis; peptidoglycan biosynthesis. Cell wall formation. Catalyzes the addition of glutamate to the nucleotide precursor UDP-N-acetylmuramoyl-L-alanine (UMA). The sequence is that of UDP-N-acetylmuramoylalanine--D-glutamate ligase from Streptococcus pneumoniae (strain P1031).